The sequence spans 915 residues: WD repeat-containing protein 44 (915 aa).

The segment covering 1-14 (MASESDTEEFYDAP) has biased composition (acidic residues). Positions 1–24 (MASESDTEEFYDAPEDVHLGTGYP) are disordered. An N-acetylalanine modification is found at Ala-2. The binding activity stretch occupies residues 2–173 (ASESDTEEFY…SSGEQLDASG (172 aa)). Ser-3 carries the post-translational modification Phosphoserine. An FFAT-like motif motif is present at residues 9-15 (EFYDAPE). Tyr-11 is subject to Phosphotyrosine. Phosphoserine is present on residues Ser-27, Ser-50, Ser-66, Ser-71, Ser-81, and Ser-126. Disordered stretches follow at residues 79–102 (DDSL…VAGT), 117–174 (LQQD…ASGL), and 208–282 (VEEV…PKEN). Residues 114-139 (EHELQQDSEKAESQNVAEESELETQK) adopt a coiled-coil conformation. A compositionally biased stretch (basic and acidic residues) spans 146–155 (TCEKSEKTVD). A phosphothreonine mark is found at Thr-161 and Thr-221. The interval 213 to 259 (PAKPPRHLTPEPDIVASTKKPVPARPPPPTNFPPPRPPPPSRPAPPP) is important for interaction with ARHGAP26 AND ARHGAP10. The span at 235 to 258 (PARPPPPTNFPPPRPPPPSRPAPP) shows a compositional bias: pro residues. Ser-264 is subject to Phosphoserine. Residues 264 to 280 (SELEFEALKTPDLDVPK) are compositionally biased toward basic and acidic residues. Thr-273 is modified (phosphothreonine). The important for interaction with RAB11A stretch occupies residues 336–349 (VMGPQRPRSNSGRE). Phosphoserine is present on residues Ser-344 and Ser-346. 2 positions are modified to phosphothreonine: Thr-351 and Thr-403. 2 disordered regions span residues 399–425 (SNDA…RLKQ) and 461–481 (DEVF…GMPY). 4 positions are modified to phosphoserine: Ser-405, Ser-472, Ser-473, and Ser-474. The segment covering 469 to 478 (DDPSSSDDEG) has biased composition (acidic residues). At Tyr-481 the chain carries Phosphotyrosine. The WD 1 repeat unit spans residues 511 to 550 (EHMGAVWTMKFSHCGRLLASAGQDNIVRIWALKNAFDYFN). The tract at residues 559 to 593 (EGRVSPSPSQESLSSSKSDTDMGVCSGTDEDPDDK) is disordered. Phosphoserine occurs at positions 563 and 567. A compositionally biased stretch (low complexity) spans 563-575 (SPSPSQESLSSSK). 7 WD repeats span residues 607 to 645 (GHTA…CLCC), 647 to 687 (QHID…VALW), 692 to 731 (GQTK…YHTQ), 742 to 781 (KVGR…LSMK), 786 to 825 (VNSS…SKFT), 840 to 880 (AHNA…EVLD), and 882 to 915 (TSTG…KTVS).

In terms of assembly, interacts with the GTP-bound form of RAB11 when membrane-associated. Interacts with GRAF1/ARHGAP26 or GRAF2/ARHGAP10; the interaction connects the endoplasmic reticulum (ER) with the endosomal tubule. Interacts (via FFAT-like motif) with VAPA (via MSP domain) or VAPB (via MSP domain); the interaction connects the ER with the endosomal tubule. Does not bind to other Rab and Rho small G proteins. In terms of processing, phosphorylated by ATK1; the phosphorylation stabilizes its interaction with RAB11A and RAB11B.

It localises to the cytoplasm. The protein localises to the cytosol. It is found in the perinuclear region. Its subcellular location is the endosome membrane. The protein resides in the golgi apparatus. It localises to the trans-Golgi network. Its function is as follows. Downstream effector for Rab11 which regulates Rab11 intracellular membrane trafficking functions such as endocytic recycling, intracellular ciliogenesis and protein export. ATK1-mediated phosphorylation of WDR44 induces binding to Rab11 which activates endocytic recycling of transferrin receptor back to the plasma membrane. When bound to Rab11, prevents the formation of the ciliogenic Rab11-Rabin8/RAB3IP-RAB11FIP3 complex, therefore inhibiting preciliary trafficking and ciliogenesis. Participates in neo-synthesized protein export by connecting the endoplasmic reticulum (ER) with the endosomal tubule via direct interactions with the integral ER proteins VAPA or VAPB and the endosomal protein GRAFs (GRAF1/ARHGAP26 or GRAF2/ARHGAP10), which facilitates the transfer of proteins such as E-cadherin, MPP14 and CFTR into a Rab8-Rab10-Rab11-dependent export route. The sequence is that of WD repeat-containing protein 44 from Mus musculus (Mouse).